A 106-amino-acid polypeptide reads, in one-letter code: Pyrimidine/purine nucleoside phosphorylase (106 aa).

The protein belongs to the nucleoside phosphorylase PpnP family.

It carries out the reaction a purine D-ribonucleoside + phosphate = a purine nucleobase + alpha-D-ribose 1-phosphate. It catalyses the reaction adenosine + phosphate = alpha-D-ribose 1-phosphate + adenine. The catalysed reaction is cytidine + phosphate = cytosine + alpha-D-ribose 1-phosphate. The enzyme catalyses guanosine + phosphate = alpha-D-ribose 1-phosphate + guanine. It carries out the reaction inosine + phosphate = alpha-D-ribose 1-phosphate + hypoxanthine. It catalyses the reaction thymidine + phosphate = 2-deoxy-alpha-D-ribose 1-phosphate + thymine. The catalysed reaction is uridine + phosphate = alpha-D-ribose 1-phosphate + uracil. The enzyme catalyses xanthosine + phosphate = alpha-D-ribose 1-phosphate + xanthine. Its function is as follows. Catalyzes the phosphorolysis of diverse nucleosides, yielding D-ribose 1-phosphate and the respective free bases. Can use uridine, adenosine, guanosine, cytidine, thymidine, inosine and xanthosine as substrates. Also catalyzes the reverse reactions. In Burkholderia ambifaria (strain MC40-6), this protein is Pyrimidine/purine nucleoside phosphorylase.